A 105-amino-acid polypeptide reads, in one-letter code: Large ribosomal subunit protein P2 (105 aa).

It belongs to the eukaryotic ribosomal protein P1/P2 family. As to quaternary structure, P1 and P2 exist as dimers at the large ribosomal subunit. In terms of processing, phosphorylated.

Plays an important role in the elongation step of protein synthesis. This Leishmania braziliensis protein is Large ribosomal subunit protein P2 (LIP2).